A 348-amino-acid chain; its full sequence is Methylthioribose-1-phosphate isomerase (348 aa).

Substrate-binding positions include 54-56, Arg-96, and Gln-199; that span reads RGA. Catalysis depends on Asp-240, which acts as the Proton donor. Substrate is bound at residue 250–251; it reads NK.

The protein belongs to the eIF-2B alpha/beta/delta subunits family. MtnA subfamily.

It catalyses the reaction 5-(methylsulfanyl)-alpha-D-ribose 1-phosphate = 5-(methylsulfanyl)-D-ribulose 1-phosphate. Its pathway is amino-acid biosynthesis; L-methionine biosynthesis via salvage pathway; L-methionine from S-methyl-5-thio-alpha-D-ribose 1-phosphate: step 1/6. Catalyzes the interconversion of methylthioribose-1-phosphate (MTR-1-P) into methylthioribulose-1-phosphate (MTRu-1-P). This chain is Methylthioribose-1-phosphate isomerase, found in Thioalkalivibrio sulfidiphilus (strain HL-EbGR7).